The chain runs to 155 residues: Probable Brix domain-containing ribosomal biogenesis protein (155 aa).

The Brix domain occupies 1–155 (MLITSSRKPS…KNYRKMVMSE (155 aa)).

Probably involved in the biogenesis of the ribosome. In Methanococcoides burtonii (strain DSM 6242 / NBRC 107633 / OCM 468 / ACE-M), this protein is Probable Brix domain-containing ribosomal biogenesis protein.